The following is a 431-amino-acid chain: Glucose-1-phosphate adenylyltransferase (431 aa).

Alpha-D-glucose 1-phosphate contacts are provided by residues G163, 178 to 179 (EK), and S210.

Belongs to the bacterial/plant glucose-1-phosphate adenylyltransferase family. Homotetramer.

The catalysed reaction is alpha-D-glucose 1-phosphate + ATP + H(+) = ADP-alpha-D-glucose + diphosphate. It functions in the pathway glycan biosynthesis; glycogen biosynthesis. Its function is as follows. Involved in the biosynthesis of ADP-glucose, a building block required for the elongation reactions to produce glycogen. Catalyzes the reaction between ATP and alpha-D-glucose 1-phosphate (G1P) to produce pyrophosphate and ADP-Glc. This is Glucose-1-phosphate adenylyltransferase from Synechococcus sp. (strain WH7803).